The following is a 130-amino-acid chain: Glycine cleavage system H protein (130 aa).

The 83-residue stretch at 24 to 106 (IYSVGITEHA…YTDGWLFRIK (83 aa)) folds into the Lipoyl-binding domain. Lys65 bears the N6-lipoyllysine mark.

It belongs to the GcvH family. The glycine cleavage system is composed of four proteins: P, T, L and H. (R)-lipoate serves as cofactor.

In terms of biological role, the glycine cleavage system catalyzes the degradation of glycine. The H protein shuttles the methylamine group of glycine from the P protein to the T protein. The sequence is that of Glycine cleavage system H protein from Pectobacterium atrosepticum (strain SCRI 1043 / ATCC BAA-672) (Erwinia carotovora subsp. atroseptica).